The primary structure comprises 1167 residues: Phenyloxazoline synthase MbtB (1167 aa).

The Carrier 1 domain occupies 2-78; the sequence is EAVVTSSQTV…AWTRLVGERT (77 aa). O-(pantetheine 4'-phosphoryl)serine is present on Ser39. Residues 78–100 form a disordered region; the sequence is TAESPGAATQSGDTAASAGDPDA. Residues 98–390 form a condensation/cyclization region; it reads PDAPFPLAPI…SSLMLDVDFT (293 aa). Residues 575 to 967 form an adenylation region; that stretch reads TYAELRERVL…RIAGVEAAVA (393 aa). Residues 1054–1130 form the Carrier 2 domain; it reads VPSTALERAL…ALARRLVDHE (77 aa). The residue at position 1089 (Ser1089) is an O-(pantetheine 4'-phosphoryl)serine.

It belongs to the ATP-dependent AMP-binding enzyme family. MbtB subfamily. Pantetheine 4'-phosphate is required as a cofactor. In terms of processing, 4'-phosphopantetheine is transferred from CoA to a specific serine in each of the two carrier protein domains, leading to their activation from apo to holo forms.

The protein operates within siderophore biosynthesis; mycobactin biosynthesis. Functionally, involved in the initial steps of the mycobactin biosynthetic pathway. Putatively couples activated salicylic acid with serine or threonine and cyclizes this precursor to the hydroxyphenyloxazoline ring system present in this class of siderophores. The sequence is that of Phenyloxazoline synthase MbtB (mbtB) from Mycobacterium sp. (strain MCS).